The sequence spans 236 residues: Hydantoin racemase (236 aa).

Homohexamer, homoheptamer or homooctamer.

The enzyme catalyses a D-5-monosubstituted hydantoin = a L-5-monosubstituted hydantoin. It carries out the reaction D-5-benzylhydantoin = L-5-benzylhydantoin. Completely inhibited by HgCl(2) and iodoacetamide. Stimulated by dithiothreitol. Involved in the asymmetric conversion of racemic 5-substituted hydantoins to the corresponding L-amino acids. Catalyzes the racemization via enolization of D- and L-5-monosubstituted hydantoins. It shows preference for hydantoins with arylalkyl side chains such as 5-benzylhydantoin (BH) and, to a lesser extent, 5-(3-indolylmethylene)hydantoin (IMH). The protein is Hydantoin racemase of Paenarthrobacter aurescens (Arthrobacter aurescens).